The primary structure comprises 81 residues: MSHSVRVYDTCIGCTQCVRACPCDVLEMVPWDGCKAGQIASAPRAEDCIGCKRCETACPTDFLSVRVYLGSETTRSLGLTY.

2 4Fe-4S ferredoxin-type domains span residues 2-31 (SHSVRVYDTCIGCTQCVRACPCDVLEMVPW) and 39-68 (IASAPRAEDCIGCKRCETACPTDFLSVRVY). The [4Fe-4S] cluster site is built by C11, C14, C17, C21, C48, C51, C54, and C58.

In terms of assembly, the eukaryotic PSI reaction center is composed of at least 11 subunits. [4Fe-4S] cluster is required as a cofactor.

Its subcellular location is the plastid. It is found in the chloroplast thylakoid membrane. The catalysed reaction is reduced [plastocyanin] + hnu + oxidized [2Fe-2S]-[ferredoxin] = oxidized [plastocyanin] + reduced [2Fe-2S]-[ferredoxin]. In terms of biological role, apoprotein for the two 4Fe-4S centers FA and FB of photosystem I (PSI); essential for photochemical activity. FB is the terminal electron acceptor of PSI, donating electrons to ferredoxin. The C-terminus interacts with PsaA/B/D and helps assemble the protein into the PSI complex. Required for binding of PsaD and PsaE to PSI. PSI is a plastocyanin/cytochrome c6-ferredoxin oxidoreductase, converting photonic excitation into a charge separation, which transfers an electron from the donor P700 chlorophyll pair to the spectroscopically characterized acceptors A0, A1, FX, FA and FB in turn. The chain is Photosystem I iron-sulfur center from Emiliania huxleyi (Coccolithophore).